Reading from the N-terminus, the 161-residue chain is Cytochrome c-type biogenesis protein CcmE (161 aa).

The Cytoplasmic segment spans residues 1-8 (MNPRRKKR). The chain crosses the membrane as a helical; Signal-anchor for type II membrane protein span at residues 9–29 (LTLAVALIAGVAAVASLLLYA). Topologically, residues 30–161 (LNSNLNLFYT…TYNQKALEDK (132 aa)) are periplasmic. H131 and Y135 together coordinate heme. The tract at residues 142 to 161 (EAMGQTHEKPTYNQKALEDK) is disordered. The span at 147–161 (THEKPTYNQKALEDK) shows a compositional bias: basic and acidic residues.

The protein belongs to the CcmE/CycJ family.

The protein localises to the cell inner membrane. Its function is as follows. Heme chaperone required for the biogenesis of c-type cytochromes. Transiently binds heme delivered by CcmC and transfers the heme to apo-cytochromes in a process facilitated by CcmF and CcmH. This Shewanella frigidimarina (strain NCIMB 400) protein is Cytochrome c-type biogenesis protein CcmE.